The following is a 348-amino-acid chain: Type II methyltransferase M.BglI (348 aa).

The protein belongs to the N(4)/N(6)-methyltransferase family.

The enzyme catalyses a 2'-deoxycytidine in DNA + S-adenosyl-L-methionine = an N(4)-methyl-2'-deoxycytidine in DNA + S-adenosyl-L-homocysteine + H(+). Functionally, a beta subtype methylase, recognizes the double-stranded sequence 5'-GCCNNNNNGGC-3', methylates C-2 on both strands, and protects the DNA from cleavage by the BglI endonuclease. The sequence is that of Type II methyltransferase M.BglI (bglIM) from Bacillus subtilis.